The following is a 496-amino-acid chain: Glycerol kinase (496 aa).

ADP is bound at residue Thr12. ATP is bound by residues Thr12, Thr13, and Ser14. Residue Thr12 coordinates sn-glycerol 3-phosphate. Position 16 (Arg16) interacts with ADP. Sn-glycerol 3-phosphate is bound by residues Arg82, Glu83, and Tyr134. Glycerol-binding residues include Arg82, Glu83, and Tyr134. His230 is subject to Phosphohistidine; by HPr. Asp244 contributes to the sn-glycerol 3-phosphate binding site. Glycerol-binding residues include Asp244 and Gln245. Residues Thr266 and Gly309 each contribute to the ADP site. 4 residues coordinate ATP: Thr266, Gly309, Gln313, and Gly410. Positions 410 and 414 each coordinate ADP.

Belongs to the FGGY kinase family. In terms of assembly, homotetramer and homodimer (in equilibrium). In terms of processing, the phosphoenolpyruvate-dependent sugar phosphotransferase system (PTS), including enzyme I, and histidine-containing protein (HPr) are required for the phosphorylation, which leads to the activation of the enzyme.

It catalyses the reaction glycerol + ATP = sn-glycerol 3-phosphate + ADP + H(+). It functions in the pathway polyol metabolism; glycerol degradation via glycerol kinase pathway; sn-glycerol 3-phosphate from glycerol: step 1/1. Activated by phosphorylation and inhibited by fructose 1,6-bisphosphate (FBP). In terms of biological role, key enzyme in the regulation of glycerol uptake and metabolism. Catalyzes the phosphorylation of glycerol to yield sn-glycerol 3-phosphate. The sequence is that of Glycerol kinase from Bacillus thuringiensis subsp. konkukian (strain 97-27).